The chain runs to 149 residues: 3-dehydroquinate dehydratase (149 aa).

Tyr-26 serves as the catalytic Proton acceptor. Substrate-binding residues include Asn-77, His-83, and Asp-90. The Proton donor role is filled by His-103. Substrate-binding positions include 104–105 and Arg-114; that span reads LS.

Belongs to the type-II 3-dehydroquinase family. As to quaternary structure, homododecamer.

The catalysed reaction is 3-dehydroquinate = 3-dehydroshikimate + H2O. It participates in metabolic intermediate biosynthesis; chorismate biosynthesis; chorismate from D-erythrose 4-phosphate and phosphoenolpyruvate: step 3/7. Its function is as follows. Catalyzes a trans-dehydration via an enolate intermediate. The polypeptide is 3-dehydroquinate dehydratase (Aeromonas hydrophila subsp. hydrophila (strain ATCC 7966 / DSM 30187 / BCRC 13018 / CCUG 14551 / JCM 1027 / KCTC 2358 / NCIMB 9240 / NCTC 8049)).